The sequence spans 732 residues: MEFETHEDAYLFYKDYAKSVGFGTAKLSSRRSRASKEFIDAKFSCIRYGSKQQSDDAINPRASPKIGCKASMHVKRRPDGKWYVYSFVKEHNHDLLPEQAHYFRSHRNTELVKSNDSRLRRKKNTPLTDCKHLSAYHDLDFIDGYMRNQHDKGRRLVLDTGDAEILLEFLMRMQEENPKFFFAVDFSEDHLLRNVFWVDAKGIEDYKSFSDVVSFETSYFVSKYKVPLVLFVGVNHHVQPVLLGCGLLADDTVYTYVWLMQSWLVAMGGQKPKVMLTDQNNAIKAAIAAVLPETRHCYCLWHVLDQLPRNLDYWSMWQDTFMKKLFKCIYRSWSEEEFDRRWLKLIDKFHLRDVPWMRSLYEERKFWAPTFMRGITFAGLSMRCRSESVNSLFDRYVHPETSLKEFLEGYGLMLEDRYEEEAKADFDAWHEAPELKSPSPFEKQMLLVYSHEIFRRFQLEVLGAAACHLTKESEEGTTYSVKDFDDEQKYLVDWDEFKSDIYCSCRSFEYKGYLCRHAIVVLQMSGVFTIPINYVLQRWTNAARNRHQISRNLELVQSNIRRFNDLCRRAIILGEEGSLSQESYDIAMFAMKEAFKQCAVTINTIKHPARCEEAAIQAGDPVQEENQYGSTSTQIGPEPNIHAGNVPWQAETRREKRSSLNNTSKKAKHVAQSETVGEGSQEGFQHVADPRQSQAVLAGQFHNTMPGVFQNLINTNFQNIPATNMHQNNPPG.

The FAR1 domain maps to 11–97 (LFYKDYAKSV…VKEHNHDLLP (87 aa)). Residues 212 to 308 (VVSFETSYFV…CLWHVLDQLP (97 aa)) form the MULE domain. An SWIM-type zinc finger spans residues 490-526 (YLVDWDEFKSDIYCSCRSFEYKGYLCRHAIVVLQMSG). The disordered stretch occupies residues 623–683 (QEENQYGSTS…ETVGEGSQEG (61 aa)). Positions 624-635 (EENQYGSTSTQI) are enriched in polar residues.

It belongs to the FHY3/FAR1 family. As to expression, expressed in hypocotyls, rosette and cauline leaves, inflorescences stems, flowers and siliques.

The protein localises to the nucleus. Putative transcription activator involved in regulating light control of development. This chain is Protein FAR1-RELATED SEQUENCE 4 (FRS4), found in Arabidopsis thaliana (Mouse-ear cress).